Consider the following 404-residue polypeptide: Cysteine desulfurase IscS (404 aa).

Residues 75 to 76 (AT), N155, Q183, and 203 to 205 (SAH) contribute to the pyridoxal 5'-phosphate site. N6-(pyridoxal phosphate)lysine is present on K206. A pyridoxal 5'-phosphate-binding site is contributed by T243. C328 functions as the Cysteine persulfide intermediate in the catalytic mechanism. Position 328 (C328) interacts with [2Fe-2S] cluster.

This sequence belongs to the class-V pyridoxal-phosphate-dependent aminotransferase family. NifS/IscS subfamily. As to quaternary structure, homodimer. Forms a heterotetramer with IscU, probably interacts with other sulfur acceptors. Pyridoxal 5'-phosphate is required as a cofactor.

Its subcellular location is the cytoplasm. The catalysed reaction is (sulfur carrier)-H + L-cysteine = (sulfur carrier)-SH + L-alanine. It functions in the pathway cofactor biosynthesis; iron-sulfur cluster biosynthesis. Inhibited by equimolar N-iodoacetyl-N'-(5-sulfo-1-naphthyl)ethylenediamine. Functionally, master enzyme that delivers sulfur to a number of partners involved in Fe-S cluster assembly, tRNA modification or cofactor biosynthesis. Catalyzes the removal of elemental sulfur from cysteine to produce alanine via an enzyme-bound persulfide intermediate. Functions as a sulfur delivery protein for Fe-S cluster synthesis. Cluster assembly on IscU homodimers proceeds sequentially from 1 2Fe-2S per dimer, to 2 2Fe-2S per dimer and finally 1 4Fe-4S per dimer. This chain is Cysteine desulfurase IscS, found in Azotobacter vinelandii.